The chain runs to 154 residues: Ascorbate-specific PTS system EIIA component (154 aa).

Residues 6–150 (SLAENKSIRL…QEVLDLIDRT (145 aa)) enclose the PTS EIIA type-2 domain. Catalysis depends on histidine 68, which acts as the Tele-phosphohistidine intermediate. At histidine 68 the chain carries Phosphohistidine.

Its subcellular location is the cytoplasm. Its function is as follows. The phosphoenolpyruvate-dependent sugar phosphotransferase system (sugar PTS), a major carbohydrate active transport system, catalyzes the phosphorylation of incoming sugar substrates concomitantly with their translocation across the cell membrane. The enzyme II UlaABC PTS system is involved in ascorbate transport. The chain is Ascorbate-specific PTS system EIIA component (ulaC) from Shigella flexneri.